We begin with the raw amino-acid sequence, 314 residues long: Dihydroorotate dehydrogenase (fumarate) (314 aa).

Residues lysine 46, 70–74 (NSMGL), and asparagine 130 contribute to the substrate site. FMN is bound at residue 46-47 (KS). Asparagine 130 provides a ligand contact to FMN. Catalysis depends on nucleophile residues serine 132 and cysteine 133. The FMN site is built by lysine 167 and isoleucine 195. Residue 196–197 (NS) coordinates substrate. FMN contacts are provided by residues glycine 224, 252-253 (GG), and 274-275 (GT).

The protein belongs to the dihydroorotate dehydrogenase family. Type 1 subfamily. As to quaternary structure, homodimer. FMN is required as a cofactor.

It localises to the cytoplasm. It carries out the reaction (S)-dihydroorotate + fumarate = orotate + succinate. It participates in pyrimidine metabolism; UMP biosynthesis via de novo pathway. In terms of biological role, catalyzes the conversion of dihydroorotate to orotate with fumarate as the electron acceptor. The sequence is that of Dihydroorotate dehydrogenase (fumarate) (URA1) from Saccharomyces bayanus (Yeast).